A 280-amino-acid chain; its full sequence is Ribulose-phosphate 3-epimerase, chloroplastic (280 aa).

The transit peptide at 1 to 45 (SLGSSTLLQSQISGFGGSQKLQKISFSNPNSLTFTRRRIQTVVNA) directs the protein to the chloroplast. Ser-62 is a substrate binding site. His-87, Asp-89, and His-120 together coordinate a divalent metal cation. Asp-89 acts as the Proton acceptor in catalysis. Substrate is bound by residues His-120, 198–201 (GFGG), 231–233 (DGG), and 253–254 (GS). Residue Asp-231 participates in a divalent metal cation binding. Asp-231 acts as the Proton donor in catalysis.

It belongs to the ribulose-phosphate 3-epimerase family. In terms of assembly, homohexamer. Requires Co(2+) as cofactor. It depends on Fe(2+) as a cofactor. The cofactor is Mn(2+). Zn(2+) is required as a cofactor. In terms of tissue distribution, highest level of expression in leaves, whereas it is low in roots, tubers, and stems.

Its subcellular location is the plastid. The protein localises to the chloroplast thylakoid membrane. It carries out the reaction D-ribulose 5-phosphate = D-xylulose 5-phosphate. It functions in the pathway carbohydrate biosynthesis; Calvin cycle. Its function is as follows. Catalyzes the reversible epimerization of D-ribulose 5-phosphate to D-xylulose 5-phosphate. In Solanum tuberosum (Potato), this protein is Ribulose-phosphate 3-epimerase, chloroplastic.